The chain runs to 473 residues: MRIASSSGILMDANGKANGSAPSALVAYFLGMGFSREMVFRAIKEIGDTDSEQILELLLTYQAIGSDPSVGNSSHSACDPQILEEEDEEEDVNWDEDDTVDNFDRATYSDGSGDEDFLQEMSEKDEKIKSLVSMGFPEDEDTEFSSFGGRKKTKLIDGSKKKRERYRSRPQWNQVPFDGSHEEPMPLPNSMVGFSLPNDGLRSVHRNLPDQALGPPFFYYENVALAPKGVWTTISRFLYDIYPEFVYSKYFCAAARKRGYIHNLPIKNRNYTRGVSRTARYRALGNSFQVDTVAYHLSVLRDIFPNGMNVLSLFSGIGGAEVALHRLGICMKTVVLVEISEVNMTLLRSWWDQTQTGTLIEIADVQNLTAERIELFIRRFGGFDLVIGGSPCNNLAGSNRYHRDGLEGKHSALFYHYYRILDSVKTIMASIFGAKGKLFRHVRKALLLKQSSSLTLKTEQDPSNNSDKDSMDK.

The 42-residue stretch at 20-61 folds into the UBA 1 domain; it reads SAPSALVAYFLGMGFSREMVFRAIKEIGDTDSEQILELLLTY. Positions 84–101 are enriched in acidic residues; that stretch reads EEEDEEEDVNWDEDDTVD. The disordered stretch occupies residues 84 to 115; the sequence is EEEDEEEDVNWDEDDTVDNFDRATYSDGSGDE. The region spanning 120-140 is the UBA 2 domain; the sequence is EMSEKDEKIKSLVSMGFPEDE. The region spanning 204–431 is the SAM-dependent MTase DRM-type domain; that stretch reads VHRNLPDQAL…DSVKTIMASI (228 aa).

The protein belongs to the class I-like SAM-binding methyltransferase superfamily. DRM-methyltransferase family.

The protein localises to the nucleus. The catalysed reaction is a 2'-deoxycytidine in DNA + S-adenosyl-L-methionine = a 5-methyl-2'-deoxycytidine in DNA + S-adenosyl-L-homocysteine + H(+). Functionally, involved in de novo DNA methylation. Involved in RNA-directed DNA methylation (RdDM). This chain is DNA (cytosine-5)-methyltransferase DRM1A, found in Oryza sativa subsp. japonica (Rice).